The sequence spans 443 residues: Phosphoglucosamine mutase (443 aa).

The active-site Phosphoserine intermediate is the serine 101. Mg(2+) contacts are provided by serine 101, aspartate 239, aspartate 241, and aspartate 243. Serine 101 carries the post-translational modification Phosphoserine.

It belongs to the phosphohexose mutase family. The cofactor is Mg(2+). In terms of processing, activated by phosphorylation.

It carries out the reaction alpha-D-glucosamine 1-phosphate = D-glucosamine 6-phosphate. Functionally, catalyzes the conversion of glucosamine-6-phosphate to glucosamine-1-phosphate. This Francisella tularensis subsp. holarctica (strain FTNF002-00 / FTA) protein is Phosphoglucosamine mutase.